Here is a 313-residue protein sequence, read N- to C-terminus: Malate dehydrogenase (313 aa).

11 to 16 (GAGHTG) provides a ligand contact to NAD(+). Substrate is bound by residues R86 and R92. Residues N99 and 122–124 (LTN) contribute to the NAD(+) site. 2 residues coordinate substrate: N124 and R155. H179 acts as the Proton acceptor in catalysis.

It belongs to the LDH/MDH superfamily. MDH type 3 family.

The enzyme catalyses (S)-malate + NAD(+) = oxaloacetate + NADH + H(+). Functionally, catalyzes the reversible oxidation of malate to oxaloacetate. In Staphylococcus epidermidis (strain ATCC 35984 / DSM 28319 / BCRC 17069 / CCUG 31568 / BM 3577 / RP62A), this protein is Malate dehydrogenase.